Reading from the N-terminus, the 28-residue chain is Alkaline serine protease NJP (28 aa).

Inhibited by PMSF. Not or very weakly inhibited by EDTA, EGTA, beta-mercaptoethanol, benzamidine, aprotinin, iodoacetic acid, pepstatin A and SBTI. Functionally, alkaline thrombin-like serine protease. Has fibrinolytic and fibrinogenolytic but not plasminogenolytic activity. Cleaves fibrinogen chains Aalpha, Bbeta and gamma chains in that order. Cleaves after Arg and Lys residues. The polypeptide is Alkaline serine protease NJP (Hediste japonica (Polychaete worm)).